The primary structure comprises 71 residues: Translation initiation factor IF-1 (71 aa).

Residues 1 to 71 (MAKQAAIEQD…LTKARITYRY (71 aa)) enclose the S1-like domain.

Belongs to the IF-1 family. Component of the 30S ribosomal translation pre-initiation complex which assembles on the 30S ribosome in the order IF-2 and IF-3, IF-1 and N-formylmethionyl-tRNA(fMet); mRNA recruitment can occur at any time during PIC assembly.

The protein localises to the cytoplasm. Its function is as follows. One of the essential components for the initiation of protein synthesis. Stabilizes the binding of IF-2 and IF-3 on the 30S subunit to which N-formylmethionyl-tRNA(fMet) subsequently binds. Helps modulate mRNA selection, yielding the 30S pre-initiation complex (PIC). Upon addition of the 50S ribosomal subunit IF-1, IF-2 and IF-3 are released leaving the mature 70S translation initiation complex. The sequence is that of Translation initiation factor IF-1 from Christiangramia forsetii (strain DSM 17595 / CGMCC 1.15422 / KT0803) (Gramella forsetii).